The following is a 314-amino-acid chain: Acetaldehyde dehydrogenase 3 (314 aa).

Catalysis depends on Cys-132, which acts as the Acyl-thioester intermediate. NAD(+) is bound by residues 163–171 and Asn-291; that span reads SAGPGTRAN.

Belongs to the acetaldehyde dehydrogenase family.

It carries out the reaction acetaldehyde + NAD(+) + CoA = acetyl-CoA + NADH + H(+). The chain is Acetaldehyde dehydrogenase 3 from Dechloromonas aromatica (strain RCB).